We begin with the raw amino-acid sequence, 698 residues long: Elongation factor G (698 aa).

Residues 8–284 (ANVRNIGIMA…AVVDFLPSPL (277 aa)) enclose the tr-type G domain. GTP-binding positions include 17-24 (AHIDAGKT), 81-85 (DTPGH), and 135-138 (NKLD). Residues 289 to 309 (IEGTGTDGETPLQRKPSTSEP) are disordered.

This sequence belongs to the TRAFAC class translation factor GTPase superfamily. Classic translation factor GTPase family. EF-G/EF-2 subfamily.

Its subcellular location is the cytoplasm. Its function is as follows. Catalyzes the GTP-dependent ribosomal translocation step during translation elongation. During this step, the ribosome changes from the pre-translocational (PRE) to the post-translocational (POST) state as the newly formed A-site-bound peptidyl-tRNA and P-site-bound deacylated tRNA move to the P and E sites, respectively. Catalyzes the coordinated movement of the two tRNA molecules, the mRNA and conformational changes in the ribosome. The sequence is that of Elongation factor G from Salinispora arenicola (strain CNS-205).